The chain runs to 72 residues: Cytochrome c oxidase subunit 2 (72 aa).

At 1-14 (MAHPSQLGFQDAAS) the chain is on the mitochondrial intermembrane side. The helical transmembrane segment at 15-45 (PVMEELLHFHDHALMIVFLISTLVLYIIVAM) threads the bilayer. The Mitochondrial matrix portion of the chain corresponds to 46–72 (VSTKLTNKHILDSQEVEIVWTILPAVI).

Belongs to the cytochrome c oxidase subunit 2 family. Component of the cytochrome c oxidase (complex IV, CIV), a multisubunit enzyme composed of 14 subunits. The complex is composed of a catalytic core of 3 subunits MT-CO1, MT-CO2 and MT-CO3, encoded in the mitochondrial DNA, and 11 supernumerary subunits COX4I, COX5A, COX5B, COX6A, COX6B, COX6C, COX7A, COX7B, COX7C, COX8 and NDUFA4, which are encoded in the nuclear genome. The complex exists as a monomer or a dimer and forms supercomplexes (SCs) in the inner mitochondrial membrane with NADH-ubiquinone oxidoreductase (complex I, CI) and ubiquinol-cytochrome c oxidoreductase (cytochrome b-c1 complex, complex III, CIII), resulting in different assemblies (supercomplex SCI(1)III(2)IV(1) and megacomplex MCI(2)III(2)IV(2)). Found in a complex with TMEM177, COA6, COX18, COX20, SCO1 and SCO2. Interacts with TMEM177 in a COX20-dependent manner. Interacts with COX20. Interacts with COX16. Cu cation is required as a cofactor.

Its subcellular location is the mitochondrion inner membrane. It carries out the reaction 4 Fe(II)-[cytochrome c] + O2 + 8 H(+)(in) = 4 Fe(III)-[cytochrome c] + 2 H2O + 4 H(+)(out). Its function is as follows. Component of the cytochrome c oxidase, the last enzyme in the mitochondrial electron transport chain which drives oxidative phosphorylation. The respiratory chain contains 3 multisubunit complexes succinate dehydrogenase (complex II, CII), ubiquinol-cytochrome c oxidoreductase (cytochrome b-c1 complex, complex III, CIII) and cytochrome c oxidase (complex IV, CIV), that cooperate to transfer electrons derived from NADH and succinate to molecular oxygen, creating an electrochemical gradient over the inner membrane that drives transmembrane transport and the ATP synthase. Cytochrome c oxidase is the component of the respiratory chain that catalyzes the reduction of oxygen to water. Electrons originating from reduced cytochrome c in the intermembrane space (IMS) are transferred via the dinuclear copper A center (CU(A)) of subunit 2 and heme A of subunit 1 to the active site in subunit 1, a binuclear center (BNC) formed by heme A3 and copper B (CU(B)). The BNC reduces molecular oxygen to 2 water molecules using 4 electrons from cytochrome c in the IMS and 4 protons from the mitochondrial matrix. This chain is Cytochrome c oxidase subunit 2 (mt-co2), found in Atractosteus spatula (Alligator gar).